The following is a 112-amino-acid chain: Large ribosomal subunit protein bL17 (112 aa).

This sequence belongs to the bacterial ribosomal protein bL17 family. In terms of assembly, part of the 50S ribosomal subunit. Contacts protein L32.

This Thermoanaerobacter pseudethanolicus (strain ATCC 33223 / 39E) (Clostridium thermohydrosulfuricum) protein is Large ribosomal subunit protein bL17.